A 189-amino-acid polypeptide reads, in one-letter code: Large ribosomal subunit protein bL9 (189 aa).

This sequence belongs to the bacterial ribosomal protein bL9 family.

Its function is as follows. Binds to the 23S rRNA. The polypeptide is Large ribosomal subunit protein bL9 (Methylocella silvestris (strain DSM 15510 / CIP 108128 / LMG 27833 / NCIMB 13906 / BL2)).